We begin with the raw amino-acid sequence, 212 residues long: Peptide methionine sulfoxide reductase MsrA (212 aa).

Residue Cys52 is part of the active site.

The protein belongs to the MsrA Met sulfoxide reductase family.

It catalyses the reaction L-methionyl-[protein] + [thioredoxin]-disulfide + H2O = L-methionyl-(S)-S-oxide-[protein] + [thioredoxin]-dithiol. The catalysed reaction is [thioredoxin]-disulfide + L-methionine + H2O = L-methionine (S)-S-oxide + [thioredoxin]-dithiol. In terms of biological role, has an important function as a repair enzyme for proteins that have been inactivated by oxidation. Catalyzes the reversible oxidation-reduction of methionine sulfoxide in proteins to methionine. The sequence is that of Peptide methionine sulfoxide reductase MsrA from Yersinia enterocolitica serotype O:8 / biotype 1B (strain NCTC 13174 / 8081).